The sequence spans 206 residues: tRNA(Phe) 7-((3-amino-3-carboxypropyl)-4-demethylwyosine(37)-N(4))-methyltransferase 2 (206 aa).

Belongs to the TYW3 family.

The enzyme catalyses 4-demethyl-7-[(3S)-3-amino-3-carboxypropyl]wyosine(37) in tRNA(Phe) + S-adenosyl-L-methionine = 7-[(3S)-3-amino-3-carboxypropyl]wyosine(37) in tRNA(Phe) + S-adenosyl-L-homocysteine + H(+). Its function is as follows. S-adenosyl-L-methionine-dependent methyltransferase that acts as a component of the wyosine derivatives biosynthesis pathway. Probably methylates N-4 position of wybutosine-86 to produce wybutosine-72. The chain is tRNA(Phe) 7-((3-amino-3-carboxypropyl)-4-demethylwyosine(37)-N(4))-methyltransferase 2 from Pyrococcus abyssi (strain GE5 / Orsay).